The sequence spans 203 residues: N-(5'-phosphoribosyl)anthranilate isomerase (203 aa).

It belongs to the TrpF family.

It carries out the reaction N-(5-phospho-beta-D-ribosyl)anthranilate = 1-(2-carboxyphenylamino)-1-deoxy-D-ribulose 5-phosphate. It functions in the pathway amino-acid biosynthesis; L-tryptophan biosynthesis; L-tryptophan from chorismate: step 3/5. This chain is N-(5'-phosphoribosyl)anthranilate isomerase, found in Thermoanaerobacter sp. (strain X514).